Consider the following 156-residue polypeptide: SsrA-binding protein (156 aa).

It belongs to the SmpB family.

The protein resides in the cytoplasm. Required for rescue of stalled ribosomes mediated by trans-translation. Binds to transfer-messenger RNA (tmRNA), required for stable association of tmRNA with ribosomes. tmRNA and SmpB together mimic tRNA shape, replacing the anticodon stem-loop with SmpB. tmRNA is encoded by the ssrA gene; the 2 termini fold to resemble tRNA(Ala) and it encodes a 'tag peptide', a short internal open reading frame. During trans-translation Ala-aminoacylated tmRNA acts like a tRNA, entering the A-site of stalled ribosomes, displacing the stalled mRNA. The ribosome then switches to translate the ORF on the tmRNA; the nascent peptide is terminated with the 'tag peptide' encoded by the tmRNA and targeted for degradation. The ribosome is freed to recommence translation, which seems to be the essential function of trans-translation. This chain is SsrA-binding protein, found in Clostridium botulinum (strain Loch Maree / Type A3).